Consider the following 283-residue polypeptide: UPF0276 protein Anae109_1558 (283 aa).

This sequence belongs to the UPF0276 family.

The chain is UPF0276 protein Anae109_1558 from Anaeromyxobacter sp. (strain Fw109-5).